A 134-amino-acid polypeptide reads, in one-letter code: DNA-binding protein inhibitor ID-2 (134 aa).

Residues serine 14 and serine 25 each carry the phosphoserine modification. Positions 23–75 (SRSKTPVDDPMSLLYNMNDCYSKLKELVPSIPQNKKVSKMEILQHVIDYILDL) constitute a bHLH domain. The Nuclear export signal motif lies at 106 to 115 (LNTDISILSL).

In terms of assembly, interacts with GATA4 and NKX2-5. Interacts with NR0B2. Interacts with CLOCK and BMAL1. Interacts with IFI204. Interacts with NEDD9/HEF1. Interacts with ASB4; this interaction promotes ID2 proteasomal degradation. Post-translationally, ubiquitinated in a ASB4-depedent manner, leading to proteasomal degradation. In terms of processing, phosphorylated in vitro by CDK1, PKA and PKC.

Its subcellular location is the cytoplasm. The protein localises to the nucleus. In terms of biological role, transcriptional regulator (lacking a basic DNA binding domain) which negatively regulates the basic helix-loop-helix (bHLH) transcription factors by forming heterodimers and inhibiting their DNA binding and transcriptional activity. Implicated in regulating a variety of cellular processes, including cellular growth, senescence, differentiation, apoptosis, angiogenesis, and neoplastic transformation. Inhibits skeletal muscle and cardiac myocyte differentiation. Regulates the circadian clock by repressing the transcriptional activator activity of the CLOCK-BMAL1 heterodimer. Restricts the CLOCK and BMAL1 localization to the cytoplasm. Plays a role in both the input and output pathways of the circadian clock: in the input component, is involved in modulating the magnitude of photic entrainment and in the output component, contributes to the regulation of a variety of liver clock-controlled genes involved in lipid metabolism. The sequence is that of DNA-binding protein inhibitor ID-2 (ID2) from Sus scrofa (Pig).